A 177-amino-acid chain; its full sequence is Coatomer subunit zeta-1 (177 aa).

This sequence belongs to the adaptor complexes small subunit family. Oligomeric complex that consists of at least the alpha, beta, beta', gamma, delta, epsilon and zeta subunits.

Its subcellular location is the cytoplasm. The protein localises to the golgi apparatus membrane. It localises to the cytoplasmic vesicle. It is found in the COPI-coated vesicle membrane. In terms of biological role, the coatomer is a cytosolic protein complex that binds to dilysine motifs and reversibly associates with Golgi non-clathrin-coated vesicles, which further mediate biosynthetic protein transport from the ER, via the Golgi up to the trans Golgi network. Coatomer complex is required for budding from Golgi membranes, and is essential for the retrograde Golgi-to-ER transport of dilysine-tagged proteins. The zeta subunit may be involved in regulating the coat assembly and, hence, the rate of biosynthetic protein transport due to its association-dissociation properties with the coatomer complex. The protein is Coatomer subunit zeta-1 of Arabidopsis thaliana (Mouse-ear cress).